Here is a 128-residue protein sequence, read N- to C-terminus: Large ribosomal subunit protein bL12 (128 aa).

This sequence belongs to the bacterial ribosomal protein bL12 family. In terms of assembly, homodimer. Part of the ribosomal stalk of the 50S ribosomal subunit. Forms a multimeric L10(L12)X complex, where L10 forms an elongated spine to which 2 to 4 L12 dimers bind in a sequential fashion. Binds GTP-bound translation factors.

Its function is as follows. Forms part of the ribosomal stalk which helps the ribosome interact with GTP-bound translation factors. Is thus essential for accurate translation. This Trichormus variabilis (strain ATCC 29413 / PCC 7937) (Anabaena variabilis) protein is Large ribosomal subunit protein bL12.